Consider the following 412-residue polypeptide: GTPase Obg (412 aa).

Residues 1-159 (MKFLDQAKIF…RWIWLRLKMI (159 aa)) enclose the Obg domain. The OBG-type G domain maps to 160–327 (ADAGLVGLPN…ILARLFTHIR (168 aa)). Residues 166–173 (GLPNAGKS), 191–195 (FTTLH), 212–215 (DIPG), 279–282 (NKCD), and 308–310 (SGV) contribute to the GTP site. Residues Ser173 and Thr193 each coordinate Mg(2+). A disordered region spans residues 335 to 412 (AVPAASPIFG…ADDEEDDAEE (78 aa)). Over residues 385 to 412 (NDGDEVDEDYDDEDLEEVADDEEDDAEE) the composition is skewed to acidic residues.

The protein belongs to the TRAFAC class OBG-HflX-like GTPase superfamily. OBG GTPase family. As to quaternary structure, monomer. It depends on Mg(2+) as a cofactor.

The protein localises to the cytoplasm. In terms of biological role, an essential GTPase which binds GTP, GDP and possibly (p)ppGpp with moderate affinity, with high nucleotide exchange rates and a fairly low GTP hydrolysis rate. Plays a role in control of the cell cycle, stress response, ribosome biogenesis and in those bacteria that undergo differentiation, in morphogenesis control. This Paramagnetospirillum magneticum (strain ATCC 700264 / AMB-1) (Magnetospirillum magneticum) protein is GTPase Obg.